The sequence spans 173 residues: Translationally-controlled tumor protein homolog (173 aa).

In terms of domain architecture, TCTP spans 1–173 (MIIFKDMITG…FKHGLEEEKV (173 aa)).

This sequence belongs to the TCTP family. Expressed by the venom gland.

The protein localises to the secreted. Functionally, venom protein that causes edema, enhances vascular permeability and is likely related to the inflammatory activity of the venom. The sequence is that of Translationally-controlled tumor protein homolog from Grammostola rosea (Chilean rose tarantula).